Consider the following 369-residue polypeptide: Mycofactocin maturase MftC (369 aa).

The region spanning 16–232 is the Radical SAM core domain; it reads LDAPICLTWE…KGERVLTGDS (217 aa). Residues Cys-30, Cys-34, Cys-37, Cys-251, Cys-258, Cys-269, Cys-310, Cys-313, Cys-319, Cys-323, and Cys-341 each coordinate [4Fe-4S] cluster. The tract at residues 347–369 is disordered; the sequence is APALAQERHAPRPRVDHSRGSRE. The segment covering 352-369 has biased composition (basic and acidic residues); that stretch reads QERHAPRPRVDHSRGSRE.

Belongs to the radical SAM superfamily. MftC family. Interacts with MftB. [4Fe-4S] cluster serves as cofactor.

The enzyme catalyses [mycofactocin precursor peptide]-C-terminal glycyl-L-valyl-L-tyrosine + S-adenosyl-L-methionine = [mycofactocin precursor peptide]-C-terminal glycyl-N-{[2-(4-hydroxyphenyl)ethenyl]-3-methylbutanamide} + 5'-deoxyadenosine + L-methionine + CO2. It catalyses the reaction [mycofactocin precursor peptide]-C-terminal glycyl-N-{[2-(4-hydroxyphenyl)ethenyl]-3-methylbutanamide} + AH2 + S-adenosyl-L-methionine = [mycofactocin precursor peptide]-C-terminal glycyl-N-{5-[(4-hydroxyphenyl)methyl]-4,4-dimethyl-2-oxopyrrolidin-3-yl}acetamide + 5'-deoxyadenosine + L-methionine + A + H(+). Radical S-adenosylmethionine (SAM) enzyme responsible for the first step of the biosynthesis of the enzyme cofactor mycofactocin (MFT). Catalyzes two reactions at the C-terminus of the mycofactocin precursor (the MftA peptide). The first one is the oxidative decarboxylation of the C-terminal L-tyrosine of MftA, forming an unsaturated tyramine moiety. The second reaction is the cross-linking of the tyramine with the penultimate L-valine residue, forming a five-membered lactam ring. Its activity requires the presence of the MftB chaperone. The polypeptide is Mycofactocin maturase MftC (Mycobacterium ulcerans (strain Agy99)).